We begin with the raw amino-acid sequence, 314 residues long: Ribose-phosphate pyrophosphokinase (314 aa).

ATP-binding positions include 37–39 (DGE) and 96–97 (RQ). Mg(2+)-binding residues include His-131 and Asp-170. Lys-194 is a catalytic residue. Residues Arg-196, Asp-220, and 224–228 (DTGGT) each bind D-ribose 5-phosphate.

Belongs to the ribose-phosphate pyrophosphokinase family. Class I subfamily. In terms of assembly, homohexamer. The cofactor is Mg(2+).

It localises to the cytoplasm. It carries out the reaction D-ribose 5-phosphate + ATP = 5-phospho-alpha-D-ribose 1-diphosphate + AMP + H(+). The protein operates within metabolic intermediate biosynthesis; 5-phospho-alpha-D-ribose 1-diphosphate biosynthesis; 5-phospho-alpha-D-ribose 1-diphosphate from D-ribose 5-phosphate (route I): step 1/1. In terms of biological role, involved in the biosynthesis of the central metabolite phospho-alpha-D-ribosyl-1-pyrophosphate (PRPP) via the transfer of pyrophosphoryl group from ATP to 1-hydroxyl of ribose-5-phosphate (Rib-5-P). The polypeptide is Ribose-phosphate pyrophosphokinase (Vibrio parahaemolyticus serotype O3:K6 (strain RIMD 2210633)).